The chain runs to 428 residues: Glutamate-1-semialdehyde 2,1-aminomutase (428 aa).

Lys-267 is subject to N6-(pyridoxal phosphate)lysine.

It belongs to the class-III pyridoxal-phosphate-dependent aminotransferase family. HemL subfamily. Homodimer. It depends on pyridoxal 5'-phosphate as a cofactor.

Its subcellular location is the cytoplasm. The enzyme catalyses (S)-4-amino-5-oxopentanoate = 5-aminolevulinate. It participates in porphyrin-containing compound metabolism; protoporphyrin-IX biosynthesis; 5-aminolevulinate from L-glutamyl-tRNA(Glu): step 2/2. This Trichlorobacter lovleyi (strain ATCC BAA-1151 / DSM 17278 / SZ) (Geobacter lovleyi) protein is Glutamate-1-semialdehyde 2,1-aminomutase.